Reading from the N-terminus, the 184-residue chain is Probable RNA 2'-phosphotransferase (184 aa).

It belongs to the KptA/TPT1 family.

Its function is as follows. Removes the 2'-phosphate from RNA via an intermediate in which the phosphate is ADP-ribosylated by NAD followed by a presumed transesterification to release the RNA and generate ADP-ribose 1''-2''-cyclic phosphate (APPR&gt;P). May function as an ADP-ribosylase. This chain is Probable RNA 2'-phosphotransferase, found in Shigella boydii serotype 18 (strain CDC 3083-94 / BS512).